The following is a 289-amino-acid chain: Ubiquinone biosynthesis O-methyltransferase (289 aa).

Arginine 36 contacts S-adenosyl-L-methionine. One can recognise an RPE1 insert domain in the interval 50-98 (RHLSKLTYREELVGNMQHSTAAYALVREDASSRLTHKLPLEAEFEKMSN). Residues glycine 109, aspartate 130, and leucine 172 each contribute to the S-adenosyl-L-methionine site.

This sequence belongs to the methyltransferase superfamily. UbiG/COQ3 family.

It catalyses the reaction a 3-demethylubiquinol + S-adenosyl-L-methionine = a ubiquinol + S-adenosyl-L-homocysteine + H(+). The catalysed reaction is a 3-(all-trans-polyprenyl)benzene-1,2-diol + S-adenosyl-L-methionine = a 2-methoxy-6-(all-trans-polyprenyl)phenol + S-adenosyl-L-homocysteine + H(+). Its pathway is cofactor biosynthesis; ubiquinone biosynthesis. In terms of biological role, O-methyltransferase that catalyzes the 2 O-methylation steps in the ubiquinone biosynthetic pathway. The chain is Ubiquinone biosynthesis O-methyltransferase from Rickettsia conorii (strain ATCC VR-613 / Malish 7).